Consider the following 224-residue polypeptide: Uracil-DNA glycosylase (224 aa).

Catalysis depends on D62, which acts as the Proton acceptor.

The protein belongs to the uracil-DNA glycosylase (UDG) superfamily. UNG family.

Its subcellular location is the cytoplasm. The enzyme catalyses Hydrolyzes single-stranded DNA or mismatched double-stranded DNA and polynucleotides, releasing free uracil.. Its function is as follows. Excises uracil residues from the DNA which can arise as a result of misincorporation of dUMP residues by DNA polymerase or due to deamination of cytosine. The sequence is that of Uracil-DNA glycosylase from Aliivibrio salmonicida (strain LFI1238) (Vibrio salmonicida (strain LFI1238)).